The chain runs to 481 residues: Methylenetetrahydrofolate--tRNA-(uracil-5-)-methyltransferase TrmFO (481 aa).

13–18 (GGGLAG) lines the FAD pocket.

The protein belongs to the MnmG family. TrmFO subfamily. The cofactor is FAD.

It is found in the cytoplasm. The catalysed reaction is uridine(54) in tRNA + (6R)-5,10-methylene-5,6,7,8-tetrahydrofolate + NADH + H(+) = 5-methyluridine(54) in tRNA + (6S)-5,6,7,8-tetrahydrofolate + NAD(+). It carries out the reaction uridine(54) in tRNA + (6R)-5,10-methylene-5,6,7,8-tetrahydrofolate + NADPH + H(+) = 5-methyluridine(54) in tRNA + (6S)-5,6,7,8-tetrahydrofolate + NADP(+). Catalyzes the folate-dependent formation of 5-methyl-uridine at position 54 (M-5-U54) in all tRNAs. In Agrobacterium fabrum (strain C58 / ATCC 33970) (Agrobacterium tumefaciens (strain C58)), this protein is Methylenetetrahydrofolate--tRNA-(uracil-5-)-methyltransferase TrmFO.